An 84-amino-acid polypeptide reads, in one-letter code: Esculentin-1Vb (84 aa).

The N-terminal stretch at 1 to 22 (MFTLKKPLLLIVLLGIISLSLC) is a signal peptide. Residues 23–36 (EQERNADEDEESET) constitute a propeptide that is removed on maturation. Cysteine 78 and cysteine 84 form a disulfide bridge.

As to expression, expressed by the skin glands.

It localises to the secreted. In terms of biological role, antimicrobial peptide. This chain is Esculentin-1Vb, found in Odorrana versabilis (Chinese bamboo leaf odorous frog).